Reading from the N-terminus, the 550-residue chain is Methionine--tRNA ligase (550 aa).

The short motif at 13–23 (PYANGPLHFGH) is the 'HIGH' region element. Zn(2+) contacts are provided by C145, C148, C158, and C161. A 'KMSKS' region motif is present at residues 331–335 (QFSKS). K334 is a binding site for ATP.

This sequence belongs to the class-I aminoacyl-tRNA synthetase family. MetG type 1 subfamily. In terms of assembly, monomer. Requires Zn(2+) as cofactor.

The protein localises to the cytoplasm. The catalysed reaction is tRNA(Met) + L-methionine + ATP = L-methionyl-tRNA(Met) + AMP + diphosphate. Its function is as follows. Is required not only for elongation of protein synthesis but also for the initiation of all mRNA translation through initiator tRNA(fMet) aminoacylation. The chain is Methionine--tRNA ligase (metG) from Chlamydia trachomatis serovar D (strain ATCC VR-885 / DSM 19411 / UW-3/Cx).